The primary structure comprises 145 residues: Ribosomal RNA large subunit methyltransferase H (145 aa).

S-adenosyl-L-methionine contacts are provided by residues Leu-64, Gly-93, and 112-117 (LSPLTF).

Belongs to the RNA methyltransferase RlmH family. In terms of assembly, homodimer.

It is found in the cytoplasm. The enzyme catalyses pseudouridine(1915) in 23S rRNA + S-adenosyl-L-methionine = N(3)-methylpseudouridine(1915) in 23S rRNA + S-adenosyl-L-homocysteine + H(+). Its function is as follows. Specifically methylates the pseudouridine at position 1915 (m3Psi1915) in 23S rRNA. The chain is Ribosomal RNA large subunit methyltransferase H from Prochlorococcus marinus (strain NATL1A).